Consider the following 215-residue polypeptide: Large ribosomal subunit protein uL3 (215 aa).

Residues 134–166 are disordered; sequence MAHGSKNHRAPGSIGAGTTPGRVFPGKRMPGRM.

Belongs to the universal ribosomal protein uL3 family. Part of the 50S ribosomal subunit. Forms a cluster with proteins L14 and L19.

Functionally, one of the primary rRNA binding proteins, it binds directly near the 3'-end of the 23S rRNA, where it nucleates assembly of the 50S subunit. This Gloeobacter violaceus (strain ATCC 29082 / PCC 7421) protein is Large ribosomal subunit protein uL3.